Consider the following 138-residue polypeptide: Acidic phospholipase A2 1 (138 aa).

Positions 1–16 (MRTLWIVAVWLMGVEG) are cleaved as a signal peptide. Disulfide bonds link Cys-42–Cys-131, Cys-44–Cys-60, Cys-59–Cys-111, Cys-65–Cys-138, Cys-66–Cys-104, Cys-73–Cys-97, and Cys-91–Cys-102. 3 residues coordinate Ca(2+): Tyr-43, Gly-45, and Gly-47. His-63 is an active-site residue. Asp-64 serves as a coordination point for Ca(2+). Asp-105 is a catalytic residue.

Monomer. Requires Ca(2+) as cofactor. In terms of tissue distribution, expressed by the venom gland.

The protein localises to the secreted. It catalyses the reaction a 1,2-diacyl-sn-glycero-3-phosphocholine + H2O = a 1-acyl-sn-glycero-3-phosphocholine + a fatty acid + H(+). Functionally, snake venom phospholipase that inhibits ADP- and collagen-induced human platelet aggregation. This inhibition is completely inhibited by abolition of catalytic activity in case of collagen as inducer and partially inhibited in case of ADP as inducer. PLA2 catalyzes the calcium-dependent hydrolysis of the 2-acyl groups in 3-sn-phosphoglycerides. The chain is Acidic phospholipase A2 1 from Macrovipera lebetinus (Levantine viper).